Reading from the N-terminus, the 301-residue chain is NAD kinase (301 aa).

The active-site Proton acceptor is the D73. NAD(+) contacts are provided by residues 73–74, 160–161, R188, D190, A198, 201–206, A225, and Q257; these read DG, NE, and TAYNIS.

The protein belongs to the NAD kinase family. A divalent metal cation is required as a cofactor.

The protein resides in the cytoplasm. The catalysed reaction is NAD(+) + ATP = ADP + NADP(+) + H(+). In terms of biological role, involved in the regulation of the intracellular balance of NAD and NADP, and is a key enzyme in the biosynthesis of NADP. Catalyzes specifically the phosphorylation on 2'-hydroxyl of the adenosine moiety of NAD to yield NADP. The protein is NAD kinase of Helicobacter hepaticus (strain ATCC 51449 / 3B1).